The sequence spans 357 residues: DNA replication and repair protein RecF (357 aa).

30–37 (GANGSGKT) is an ATP binding site.

It belongs to the RecF family.

The protein resides in the cytoplasm. Functionally, the RecF protein is involved in DNA metabolism; it is required for DNA replication and normal SOS inducibility. RecF binds preferentially to single-stranded, linear DNA. It also seems to bind ATP. This chain is DNA replication and repair protein RecF, found in Salmonella heidelberg (strain SL476).